The sequence spans 317 residues: Thymidylate synthase (317 aa).

Residues Arg-24 and 179 to 180 (RR) each bind dUMP. The active-site Nucleophile is Cys-199. DUMP contacts are provided by residues 219–222 (RSAD), Asn-230, and 260–262 (HIY). Asp-222 is a (6R)-5,10-methylene-5,6,7,8-tetrahydrofolate binding site. Ala-316 is a (6R)-5,10-methylene-5,6,7,8-tetrahydrofolate binding site.

This sequence belongs to the thymidylate synthase family. Bacterial-type ThyA subfamily. In terms of assembly, homodimer.

It is found in the cytoplasm. The catalysed reaction is dUMP + (6R)-5,10-methylene-5,6,7,8-tetrahydrofolate = 7,8-dihydrofolate + dTMP. It functions in the pathway pyrimidine metabolism; dTTP biosynthesis. Its function is as follows. Catalyzes the reductive methylation of 2'-deoxyuridine-5'-monophosphate (dUMP) to 2'-deoxythymidine-5'-monophosphate (dTMP) while utilizing 5,10-methylenetetrahydrofolate (mTHF) as the methyl donor and reductant in the reaction, yielding dihydrofolate (DHF) as a by-product. This enzymatic reaction provides an intracellular de novo source of dTMP, an essential precursor for DNA biosynthesis. The chain is Thymidylate synthase from Oceanobacillus iheyensis (strain DSM 14371 / CIP 107618 / JCM 11309 / KCTC 3954 / HTE831).